The primary structure comprises 236 residues: Oligogalacturonate-specific porin KdgM (236 aa).

Positions 1–20 (MKIKLLTLAVASLVSVNALA) are cleaved as a signal peptide.

The protein belongs to the oligogalacturonate-specific porin KdgM (TC 1.B.35) family. As to quaternary structure, monomer.

It localises to the cell outer membrane. In terms of biological role, porin specific for oligogalacturonides. Also required for full virulence. In Dickeya dadantii (strain 3937) (Erwinia chrysanthemi (strain 3937)), this protein is Oligogalacturonate-specific porin KdgM (kdgM).